The primary structure comprises 94 residues: Ubiquitin-like protein ATG12B (94 aa).

N-acetylalanine is present on Ala2. A Glycyl lysine isopeptide (Gly-Lys) (interchain with K-128 in ATG5) cross-link involves residue Gly94.

The protein belongs to the ATG12 family. In terms of tissue distribution, ubiquitous.

The protein localises to the cytoplasm. Ubiquitin-like protein involved in cytoplasm to vacuole transport (Cvt) and autophagy vesicles formation. Conjugation with ATG5 through a ubiquitin-like conjugating system involving also ATG7 as an E1-like activating enzyme and ATG10 as an E2-like conjugating enzyme, is essential for its function. ATG12/ATG5 conjugate has an essential role in plant nutrient recycling. This chain is Ubiquitin-like protein ATG12B (ATG12B), found in Arabidopsis thaliana (Mouse-ear cress).